Reading from the N-terminus, the 898-residue chain is Zinc finger protein 574 (898 aa).

C2H2-type zinc fingers lie at residues 16–38, 76–98, and 126–148; these read YVCS…QNSH, YQCL…QELH, and YECV…RQTH. S164 carries the post-translational modification Phosphoserine. A C2H2-type 4 zinc finger spans residues 213–235; the sequence is YKCSECSQLFQMPADFLEHQATH. The interval 243-305 is disordered; that stretch reads AEEPATQQET…PRRSSSGESG (63 aa). Residues 273-290 show a composition bias toward basic and acidic residues; sequence HSYELRNELRNGEAMGRD. At S301 the chain carries Phosphoserine. C2H2-type zinc fingers lie at residues 310-332, 337-359, 365-387, and 393-414; these read LFCS…LRSH, FKCP…LGDH, FLCV…RRAH, and HSCP…RRTH. Residues 417–460 form a disordered region; sequence GGVPLPTTPVPPEEPAISFPEPAPAETGELEAPELPVSEESSAE. 6 C2H2-type zinc fingers span residues 467-490, 496-518, 524-546, 552-574, 580-602, and 608-631; these read YRCL…RFVH, HKCS…LRTH, FPCP…RLTH, YRCG…RLVH, YRCQ…RYHH, and YKCR…LVVH. A C2H2-type 15; degenerate zinc finger spans residues 637–660; the sequence is HRCPSCGAAFPSSLRLREHRCAAA. A C2H2-type 16 zinc finger spans residues 668–690; that stretch reads FECGTCGKKVGSAARLQAHEAAH. The disordered stretch occupies residues 691-735; sequence AAAGPGEVLAKEPPAPRAARATRTPVAPSPTALGGTTSAAPAAPA. The segment covering 707 to 734 has biased composition (low complexity); it reads RAARATRTPVAPSPTALGGTTSAAPAAP. S719 is subject to Phosphoserine. T726 is modified (phosphothreonine). C2H2-type zinc fingers lie at residues 740–762, 768–790, 796–818, and 824–846; these read LECS…RRIH, YPCP…RRLH, FACE…RRIH, and YSCP…RKTH. Position 834 is an asymmetric dimethylarginine (R834).

It belongs to the krueppel C2H2-type zinc-finger protein family.

The protein resides in the nucleus. Functionally, may be involved in transcriptional regulation. The polypeptide is Zinc finger protein 574 (Znf574) (Rattus norvegicus (Rat)).